A 390-amino-acid polypeptide reads, in one-letter code: Bifunctional enzyme IspD/IspF (390 aa).

Residues 1–229 (MAAGRGERAG…RQDHAVFPDI (229 aa)) form a 2-C-methyl-D-erythritol 4-phosphate cytidylyltransferase region. Positions 230–390 (RTGNGYDVHS…TVIYPGEVPE (161 aa)) are 2-C-methyl-D-erythritol 2,4-cyclodiphosphate synthase. 2 residues coordinate a divalent metal cation: aspartate 236 and histidine 238. 4-CDP-2-C-methyl-D-erythritol 2-phosphate contacts are provided by residues 236-238 (DVH) and 262-263 (HS). An a divalent metal cation-binding site is contributed by histidine 270. 4-CDP-2-C-methyl-D-erythritol 2-phosphate is bound by residues 284 to 286 (DIG), 360 to 363 (TTNE), phenylalanine 367, and arginine 370.

In the N-terminal section; belongs to the IspD/TarI cytidylyltransferase family. IspD subfamily. It in the C-terminal section; belongs to the IspF family. The cofactor is a divalent metal cation.

It catalyses the reaction 2-C-methyl-D-erythritol 4-phosphate + CTP + H(+) = 4-CDP-2-C-methyl-D-erythritol + diphosphate. It carries out the reaction 4-CDP-2-C-methyl-D-erythritol 2-phosphate = 2-C-methyl-D-erythritol 2,4-cyclic diphosphate + CMP. Its pathway is isoprenoid biosynthesis; isopentenyl diphosphate biosynthesis via DXP pathway; isopentenyl diphosphate from 1-deoxy-D-xylulose 5-phosphate: step 2/6. It participates in isoprenoid biosynthesis; isopentenyl diphosphate biosynthesis via DXP pathway; isopentenyl diphosphate from 1-deoxy-D-xylulose 5-phosphate: step 4/6. Functionally, bifunctional enzyme that catalyzes the formation of 4-diphosphocytidyl-2-C-methyl-D-erythritol from CTP and 2-C-methyl-D-erythritol 4-phosphate (MEP) (IspD), and catalyzes the conversion of 4-diphosphocytidyl-2-C-methyl-D-erythritol 2-phosphate (CDP-ME2P) to 2-C-methyl-D-erythritol 2,4-cyclodiphosphate (ME-CPP) with a corresponding release of cytidine 5-monophosphate (CMP) (IspF). In Brucella abortus biovar 1 (strain 9-941), this protein is Bifunctional enzyme IspD/IspF.